Here is a 190-residue protein sequence, read N- to C-terminus: Surfactant protein C (190 aa).

Residues 1-23 (MDVGSKEVLIENPPDYSAAPQGR) constitute a propeptide that is removed on maturation. Residue C28 is the site of S-palmitoyl cysteine attachment. The propeptide occupies 59 to 190 (HMSQKHTEMV…LCGEVPLYYI (132 aa)). In terms of domain architecture, BRICHOS spans 94-190 (FSIGSTGIVV…LCGEVPLYYI (97 aa)). A disulfide bridge connects residues C121 and C182.

The protein resides in the secreted. Its subcellular location is the extracellular space. It localises to the surface film. Its function is as follows. Pulmonary surfactant associated proteins promote alveolar stability by lowering the surface tension at the air-liquid interface in the peripheral air spaces. The sequence is that of Surfactant protein C (SFTPC) from Neovison vison (American mink).